A 487-amino-acid polypeptide reads, in one-letter code: 2-aminomuconic semialdehyde dehydrogenase (487 aa).

231-236 (GSQPTA) contacts NAD(+). Residue glutamate 253 is the Proton acceptor of the active site. Cysteine 287 serves as the catalytic Nucleophile. At serine 362 the chain carries Phosphoserine.

Belongs to the aldehyde dehydrogenase family. Detected in hepatocytes and in proximal and distal convoluted tubules in kidney cortex (at protein level). Highly expressed in adult liver and in kidney cortex. First detected in embryonic liver after 15 days of development.

Its subcellular location is the cytoplasm. The enzyme catalyses 2-aminomuconate 6-semialdehyde + NAD(+) + H2O = (2Z,4E)-2-aminomuconate + NADH + 2 H(+). The protein operates within amino-acid degradation; L-kynurenine degradation. Catalyzes the NAD-dependent oxidation of 2-aminomuconic semialdehyde of the kynurenine metabolic pathway in L-tryptophan degradation. This is 2-aminomuconic semialdehyde dehydrogenase (Aldh8a1) from Mus musculus (Mouse).